The sequence spans 142 residues: Serine protease inhibitor (142 aa).

Residue serine 1 is modified to N-acetylserine.

Its function is as follows. Serine protease inhibitor. Active against beta-trypsin and alpha-chymotrypsin with dissociation constants of 0.35 nM and 40 nM respectively. Inhibits factor XIa, but not other enzymes involved in coagulation and fibrinolysis. Does not inhibit subtilisin, lysyl endopeptidase, arginyl endopeptidase or papain. The chain is Serine protease inhibitor from Lentinula edodes (Shiitake mushroom).